A 281-amino-acid chain; its full sequence is Large ribosomal subunit protein uL2 (281 aa).

The tract at residues 223-255 (TVRGSVMNPNDHPHGGGEGRAPIGRKSPVTPWG) is disordered.

This sequence belongs to the universal ribosomal protein uL2 family. Part of the 50S ribosomal subunit. Forms a bridge to the 30S subunit in the 70S ribosome.

Functionally, one of the primary rRNA binding proteins. Required for association of the 30S and 50S subunits to form the 70S ribosome, for tRNA binding and peptide bond formation. It has been suggested to have peptidyltransferase activity; this is somewhat controversial. Makes several contacts with the 16S rRNA in the 70S ribosome. This Mycoplasma capricolum subsp. capricolum (strain California kid / ATCC 27343 / NCTC 10154) protein is Large ribosomal subunit protein uL2.